The chain runs to 185 residues: Ribosome-recycling factor (185 aa).

This sequence belongs to the RRF family.

It localises to the cytoplasm. Its function is as follows. Responsible for the release of ribosomes from messenger RNA at the termination of protein biosynthesis. May increase the efficiency of translation by recycling ribosomes from one round of translation to another. The polypeptide is Ribosome-recycling factor (Clostridium beijerinckii (strain ATCC 51743 / NCIMB 8052) (Clostridium acetobutylicum)).